The primary structure comprises 209 residues: Octanoyltransferase (209 aa).

One can recognise a BPL/LPL catalytic domain in the interval 30 to 209 (DNEPEIVYLV…IQTEFNKIFK (180 aa)). Substrate-binding positions include 69 to 76 (RGGKFTFH), 143 to 145 (AIG), and 156 to 158 (GIA). C174 functions as the Acyl-thioester intermediate in the catalytic mechanism.

It belongs to the LipB family.

The protein resides in the cytoplasm. The catalysed reaction is octanoyl-[ACP] + L-lysyl-[protein] = N(6)-octanoyl-L-lysyl-[protein] + holo-[ACP] + H(+). It participates in protein modification; protein lipoylation via endogenous pathway; protein N(6)-(lipoyl)lysine from octanoyl-[acyl-carrier-protein]: step 1/2. In terms of biological role, catalyzes the transfer of endogenously produced octanoic acid from octanoyl-acyl-carrier-protein onto the lipoyl domains of lipoate-dependent enzymes. Lipoyl-ACP can also act as a substrate although octanoyl-ACP is likely to be the physiological substrate. In Rickettsia prowazekii (strain Madrid E), this protein is Octanoyltransferase.